The following is a 235-amino-acid chain: Putative homeobox-leucine zipper protein ATHB-51 (235 aa).

A DNA-binding region (homeobox) is located at residues 74–133 (EMIKKKRLTSGQLASLERSFQEEIKLDSDRKVKLSRELGLQPRQIAVWFQNRRARWKAKQ). The interval 134-162 (LEQLYDSLRQEYDVVSREKQMLHDEVKKL) is leucine-zipper.

This sequence belongs to the HD-ZIP homeobox family. Class I subfamily. As to expression, widely expressed.

The protein resides in the nucleus. Putative transcription factor. In Arabidopsis thaliana (Mouse-ear cress), this protein is Putative homeobox-leucine zipper protein ATHB-51 (ATHB-51).